A 145-amino-acid polypeptide reads, in one-letter code: Deoxyuridine 5'-triphosphate nucleotidohydrolase (145 aa).

Substrate is bound by residues 65–67 (RSG), Asn78, and 82–84 (TID).

It belongs to the dUTPase family. Requires Mg(2+) as cofactor.

The enzyme catalyses dUTP + H2O = dUMP + diphosphate + H(+). It functions in the pathway pyrimidine metabolism; dUMP biosynthesis; dUMP from dCTP (dUTP route): step 2/2. This enzyme is involved in nucleotide metabolism: it produces dUMP, the immediate precursor of thymidine nucleotides and it decreases the intracellular concentration of dUTP so that uracil cannot be incorporated into DNA. The chain is Deoxyuridine 5'-triphosphate nucleotidohydrolase from Clostridium tetani (strain Massachusetts / E88).